The sequence spans 148 residues: uncharacterized protein (148 aa).

The segment at 38–99 (QFRRHHHAEH…RRHLRKGHLK (62 aa)) is disordered. Positions 64–82 (FHHDGGRHGHATRIHENNR) are enriched in basic and acidic residues. Residues 83 to 99 (RPHKRNRRRHLRKGHLK) are compositionally biased toward basic residues.

This is an uncharacterized protein from Fowl adenovirus A serotype 1 (strain CELO / Phelps) (FAdV-1).